We begin with the raw amino-acid sequence, 140 residues long: Putative pre-16S rRNA nuclease (140 aa).

Belongs to the YqgF nuclease family.

The protein localises to the cytoplasm. Functionally, could be a nuclease involved in processing of the 5'-end of pre-16S rRNA. In Yersinia pseudotuberculosis serotype IB (strain PB1/+), this protein is Putative pre-16S rRNA nuclease.